A 122-amino-acid polypeptide reads, in one-letter code: Large ribosomal subunit protein uL14 (122 aa).

The protein belongs to the universal ribosomal protein uL14 family. In terms of assembly, part of the 50S ribosomal subunit. Forms a cluster with proteins L3 and L19. In the 70S ribosome, L14 and L19 interact and together make contacts with the 16S rRNA in bridges B5 and B8.

In terms of biological role, binds to 23S rRNA. Forms part of two intersubunit bridges in the 70S ribosome. The protein is Large ribosomal subunit protein uL14 of Thiobacillus denitrificans (strain ATCC 25259 / T1).